A 453-amino-acid polypeptide reads, in one-letter code: tRNA modification GTPase MnmE (453 aa).

Residues Arg-22, Glu-79, and Lys-119 each coordinate (6S)-5-formyl-5,6,7,8-tetrahydrofolate. Residues 215-376 (GMKVVIAGRP…LKLHLKSLMG (162 aa)) enclose the TrmE-type G domain. Position 225 (Asn-225) interacts with K(+). GTP is bound by residues 225-230 (NAGKSS), 244-250 (TEIAGTT), 269-272 (DTAG), and 334-337 (NKAD). Position 229 (Ser-229) interacts with Mg(2+). Residues Thr-244, Ile-246, and Thr-249 each coordinate K(+). Residue Thr-250 participates in Mg(2+) binding. Lys-453 is a (6S)-5-formyl-5,6,7,8-tetrahydrofolate binding site.

This sequence belongs to the TRAFAC class TrmE-Era-EngA-EngB-Septin-like GTPase superfamily. TrmE GTPase family. In terms of assembly, homodimer. Heterotetramer of two MnmE and two MnmG subunits. The cofactor is K(+).

Its subcellular location is the cytoplasm. Functionally, exhibits a very high intrinsic GTPase hydrolysis rate. Involved in the addition of a carboxymethylaminomethyl (cmnm) group at the wobble position (U34) of certain tRNAs, forming tRNA-cmnm(5)s(2)U34. The chain is tRNA modification GTPase MnmE from Shewanella sp. (strain W3-18-1).